An 80-amino-acid polypeptide reads, in one-letter code: MPKRVLQGVVVSDKNDKTVVVKVERRYSHPLLQKTVRQSKKYKAHDENNQFKVGDFVSIQESAPISKDKRWVVLTSEAAG.

It belongs to the universal ribosomal protein uS17 family. Part of the 30S ribosomal subunit.

Functionally, one of the primary rRNA binding proteins, it binds specifically to the 5'-end of 16S ribosomal RNA. This Brucella abortus (strain S19) protein is Small ribosomal subunit protein uS17.